Here is a 53-residue protein sequence, read N- to C-terminus: Sec-independent protein translocase protein TatA (53 aa).

The helical transmembrane segment at 1–21 (MGMSFSHLLIVLLIIFVLFGA) threads the bilayer.

The protein belongs to the TatA/E family. In terms of assembly, the Tat system comprises two distinct complexes: a TatABC complex, containing multiple copies of TatA, TatB and TatC subunits, and a separate TatA complex, containing only TatA subunits. Substrates initially bind to the TatABC complex, which probably triggers association of the separate TatA complex to form the active translocon.

The protein localises to the cell inner membrane. In terms of biological role, part of the twin-arginine translocation (Tat) system that transports large folded proteins containing a characteristic twin-arginine motif in their signal peptide across membranes. TatA could form the protein-conducting channel of the Tat system. The chain is Sec-independent protein translocase protein TatA from Rickettsia akari (strain Hartford).